The primary structure comprises 500 residues: Intermediate filament protein ifc-1 (500 aa).

A head region spans residues 1–36 (MSLYGGIPTNLVSGMSSAGAICTTQIRDAREREKRE). The IF rod domain maps to 33 to 383 (EKREIGLLND…VLLNGANVTT (351 aa)). Residues 37–68 (IGLLNDRLADYIEKVRFLKAQNHVLSHDIEIL) form a coil 1A region. Residues 69 to 81 (RRGFSGGGHISSF) are linker 1. The interval 82–219 (FESEISNCTV…TENSSRIEQE (138 aa)) is coil 1B. Positions 220-237 (LIYIHRDTTLENRDYFRQ) are linker 12. The coil 2 stretch occupies residues 238–383 (ELQAAMRDIR…VLLNGANVTT (146 aa)). The tail stretch occupies residues 384-496 (YVSNSTGAAG…RHHESSYSYS (113 aa)).

It belongs to the intermediate filament family.

It localises to the cytoplasm. Cytoplasmic intermediate filaments provide mechanical strength to cells. Not essential protein. The sequence is that of Intermediate filament protein ifc-1 (ifc-1) from Caenorhabditis elegans.